We begin with the raw amino-acid sequence, 1902 residues long: Plexin-B3 (1902 aa).

The signal sequence occupies residues 1 to 36 (MLTDFLQAPVMAPWSPFSLHLLLLFLPLLPLTRVHR). Residues 37-461 (FSVPNTSFNH…TAQQVDRILV (425 aa)) enclose the Sema domain. At 37–1245 (FSVPNTSFNH…MMSTFPVEAQ (1209 aa)) the chain is on the extracellular side. Residue asparagine 41 is glycosylated (N-linked (GlcNAc...) asparagine). 2 disulfides stabilise this stretch: cysteine 88–cysteine 97 and cysteine 122–cysteine 130. Asparagine 221 carries an N-linked (GlcNAc...) asparagine glycan. Intrachain disulfides connect cysteine 257/cysteine 360, cysteine 273/cysteine 305, and cysteine 323/cysteine 347. The disordered stretch occupies residues 353–372 (DSPESYPCGDEHTPSPIAGR). Residues asparagine 416 and asparagine 469 are each glycosylated (N-linked (GlcNAc...) asparagine). The PSI 1 domain occupies 463 to 515 (ACPQFPNCTTCLQARDPLCGWCILQGRCTRRGECGRAAQPNHWLWSYEDNHCP). 5 disulfide bridges follow: cysteine 464/cysteine 481, cysteine 470/cysteine 514, cysteine 473/cysteine 490, cysteine 484/cysteine 496, and cysteine 551/cysteine 569. PSI domains follow at residues 609–671 (DCSA…EACP) and 776–822 (DCAM…QLCP). N-linked (GlcNAc...) asparagine glycosylation is found at asparagine 791, asparagine 889, asparagine 910, asparagine 946, asparagine 1090, and asparagine 1207. IPT/TIG domains follow at residues 823–914 (IPSI…FTYQ), 915–1001 (DPVL…FRYT), 1003–1134 (NPQL…FLYQ), and 1154–1221 (KPGH…QMGN). Residues 1246–1266 (LGLGMGAAVLIAAVLLLTLMY) traverse the membrane as a helical segment. Over 1267–1902 (RHKSKKALRD…ALVEYKVTDL (636 aa)) the chain is Cytoplasmic.

It belongs to the plexin family. In terms of assembly, binds MET and MST1R. Interacts with RIT2/RIN. May form homodimers (via Sema domain). Interacts (via cytoplasmic domain) with FSCN1, ARHGDIA and RAC1. In terms of tissue distribution, expressed in brain (at protein level). In cerebellum, strongest expression detected in Purkinje and granular cells. Detected at very low levels in several fetal tissues, including dorsal root ganglia (DRG), heart, lung, optic bulb, brain and liver.

It localises to the cell membrane. Functionally, receptor for SEMA5A that plays a role in axon guidance, invasive growth and cell migration. Stimulates neurite outgrowth and mediates Ca(2+)/Mg(2+)-dependent cell aggregation. In glioma cells, SEMA5A stimulation of PLXNB3 results in the disassembly of F-actin stress fibers, disruption of focal adhesions and cellular collapse as well as inhibition of cell migration and invasion through ARHGDIA-mediated inactivation of RAC1. Seem to be non-essential for normal development and function of the central nervous system. In Mus musculus (Mouse), this protein is Plexin-B3 (Plxnb3).